Here is a 1810-residue protein sequence, read N- to C-terminus: Trinucleotide repeat-containing gene 6B protein (1810 aa).

Positions 1–22 (MQTNEGEVEEESSSQVEQEDFV) are enriched in acidic residues. Disordered stretches follow at residues 1 to 221 (MQTN…PNPI), 235 to 1080 (EEWP…KKQM), 1141 to 1196 (MRKD…SSPG), and 1293 to 1329 (ALQQ…NMVP). Positions 33–75 (GEESKQEKEQEREEQLMEDKKRKKEDKKKKEATQKVTEQKTKV) form a coiled coil. 2 stretches are compositionally biased toward basic and acidic residues: residues 34 to 52 (EESK…MEDK) and 60 to 77 (KKKE…KVPE). Residues 37 to 1028 (KQEKEQEREE…AMKPNSKSMQ (992 aa)) form an interaction with argonaute proteins region. Residues 88-106 (AASPIGSSPSPPVNGGNNA) are compositionally biased toward low complexity. Positions 123–139 (MPREVPPRFRCQQDHKV) are enriched in basic and acidic residues. The span at 165-174 (APGANPNNNA) shows a compositional bias: low complexity. Positions 180 to 190 (LLQSESGTAPE) are enriched in polar residues. Low complexity-rich tracts occupy residues 207–220 (GPGA…SPNP) and 248–260 (SSEN…SASN). Composition is skewed to polar residues over residues 261 to 290 (PGSE…SGNE) and 306 to 327 (QPPN…TSGQ). 3 stretches are compositionally biased toward low complexity: residues 335-346 (GFSNFNPNSNPS), 363-380 (ETES…GQAS), and 416-425 (NSLNLSSPNP). Residues 438–451 (GNTSRSTDAPSQST) are compositionally biased toward polar residues. Over residues 475 to 486 (SGQSNSGNNGNN) the composition is skewed to low complexity. 4 stretches are compositionally biased toward polar residues: residues 504-528 (GSKS…PQDN), 564-575 (GPNQPNSSTGAW), 611-623 (TGSN…SDSH), and 655-667 (LSNT…QIKQ). Basic and acidic residues predominate over residues 675-688 (EVPRPEGKSDKGTE). Composition is skewed to polar residues over residues 774–783 (QPNQGWTSGK) and 793–804 (VKNNNWESSANK). Positions 809-824 (WGEGGQNEIGTWGNGG) are enriched in gly residues. The segment covering 846 to 857 (TGRQPNSWNKQH) has biased composition (polar residues). Ser913 is subject to Phosphoserine. Polar residues-rich tracts occupy residues 934 to 950 (NSYN…NSQG), 964 to 975 (TGKSASVWSKST), 1004 to 1027 (ASTT…SKSM), 1057 to 1072 (TAGS…SASW), and 1175 to 1195 (GNST…SSSP). Positions 1191–1700 (LSSSPGLRAQ…LAEFATEDEV (510 aa)) are silencing domain; interaction with CNOT1 and PAN3. A compositionally biased stretch (low complexity) spans 1295–1307 (QQQQQQQQQQQRQ). Ser1409 carries the post-translational modification Phosphoserine. Thr1426 bears the Phosphothreonine mark. Residue Ser1438 is modified to Phosphoserine. Phosphothreonine is present on Thr1441. The PABPC1-interacting motif-2 (PAM2) stretch occupies residues 1449 to 1467 (SNASWPPEFQPGVPWKGIQ). The disordered stretch occupies residues 1568-1619 (SSRNTTPLTRPPPGLTNPKPASPWSSTAPRSVRGWGTQDSRIASASTWSDGG). Residues 1604–1617 (TQDSRIASASTWSD) are compositionally biased toward polar residues. Residues 1625 to 1697 (YWLVLHNLTP…TTILAEFATE (73 aa)) form the RRM domain. Disordered stretches follow at residues 1706-1740 (QAQP…GPAL) and 1786-1810 (EDPH…SDSI). Over residues 1722–1733 (GWQSLETSQNQA) the composition is skewed to polar residues. The span at 1792–1801 (GSPAPLLPGD) shows a compositional bias: low complexity. Phosphoserine is present on residues Ser1793 and Ser1809.

The protein belongs to the GW182 family. In terms of assembly, interacts with AGO1, AGO2, AGO3 and AGO4. Interacts with CNOT1; the interaction mediates the association with the CCR4-NOT complex. Interacts with PAN3; the interaction mediates the association with the PAN complex. Interacts with MOV10; the interaction is direct and RNA-dependent.

The protein localises to the cytoplasm. It is found in the P-body. Its function is as follows. Plays a role in RNA-mediated gene silencing by both micro-RNAs (miRNAs) and short interfering RNAs (siRNAs). Required for miRNA-dependent translational repression and siRNA-dependent endonucleolytic cleavage of complementary mRNAs by argonaute family proteins. As scaffolding protein associates with argonaute proteins bound to partially complementary mRNAs and simultaneously can recruit CCR4-NOT and PAN deadenylase complexes. The polypeptide is Trinucleotide repeat-containing gene 6B protein (Tnrc6b) (Mus musculus (Mouse)).